The following is a 433-amino-acid chain: Trigger factor (433 aa).

The PPIase FKBP-type domain maps to 161–246 (NDRVIIDFVG…LNKVENMILP (86 aa)).

The protein belongs to the FKBP-type PPIase family. Tig subfamily.

Its subcellular location is the cytoplasm. It catalyses the reaction [protein]-peptidylproline (omega=180) = [protein]-peptidylproline (omega=0). Functionally, involved in protein export. Acts as a chaperone by maintaining the newly synthesized protein in an open conformation. Functions as a peptidyl-prolyl cis-trans isomerase. The sequence is that of Trigger factor from Haemophilus ducreyi (strain 35000HP / ATCC 700724).